The chain runs to 162 residues: MLHALQWRKYMAEENNNEELRHLVRIMNTDLKGAKPVEYALTGLPGIGRRTAILIAKGAGVDPTATLGYLPDEEVAKLDAAIGKFEEIVPSWMLNRQKDLTTGQDKHLLGTDILLTFREDINNLKKVRAYRGLRHERGLKVRGQRTKSTGRRGSTVGVSRKK.

A disordered region spans residues 142-162 (RGQRTKSTGRRGSTVGVSRKK).

This sequence belongs to the universal ribosomal protein uS13 family. In terms of assembly, part of the 30S ribosomal subunit. Forms a loose heterodimer with protein S19. Forms two bridges to the 50S subunit in the 70S ribosome.

Functionally, located at the top of the head of the 30S subunit, it contacts several helices of the 16S rRNA. In the 70S ribosome it contacts the 23S rRNA (bridge B1a) and protein L5 of the 50S subunit (bridge B1b), connecting the 2 subunits; these bridges are implicated in subunit movement. The polypeptide is Small ribosomal subunit protein uS13 (Methanosarcina mazei (strain ATCC BAA-159 / DSM 3647 / Goe1 / Go1 / JCM 11833 / OCM 88) (Methanosarcina frisia)).